A 90-amino-acid polypeptide reads, in one-letter code: Small ribosomal subunit protein uS17 (90 aa).

Belongs to the universal ribosomal protein uS17 family. Part of the 30S ribosomal subunit.

In terms of biological role, one of the primary rRNA binding proteins, it binds specifically to the 5'-end of 16S ribosomal RNA. The sequence is that of Small ribosomal subunit protein uS17 from Burkholderia multivorans (strain ATCC 17616 / 249).